The chain runs to 295 residues: Putative S-adenosyl-L-methionine-dependent methyltransferase Mvan_0910 (295 aa).

Residues D126 and D155 to L156 contribute to the S-adenosyl-L-methionine site.

This sequence belongs to the UPF0677 family.

Exhibits S-adenosyl-L-methionine-dependent methyltransferase activity. This Mycolicibacterium vanbaalenii (strain DSM 7251 / JCM 13017 / BCRC 16820 / KCTC 9966 / NRRL B-24157 / PYR-1) (Mycobacterium vanbaalenii) protein is Putative S-adenosyl-L-methionine-dependent methyltransferase Mvan_0910.